We begin with the raw amino-acid sequence, 260 residues long: Putative ATP-binding protein BruAb2_1123 (260 aa).

Residues 5 to 228 (ISFNNVVMRY…DLPYPRTEAI (224 aa)) enclose the ABC transporter domain. 37 to 44 (GPSGCGKS) lines the ATP pocket.

Belongs to the ABC transporter superfamily. In terms of assembly, the complex is composed of two ATP-binding proteins (BruAb2_1123), two transmembrane proteins (BruAb2_1124) and a solute-binding protein (BruAb2_1122).

The protein localises to the cell inner membrane. Functionally, probably part of an ABC transporter complex. Probably Responsible for energy coupling to the transport system. This Brucella abortus biovar 1 (strain 9-941) protein is Putative ATP-binding protein BruAb2_1123.